We begin with the raw amino-acid sequence, 76 residues long: Esculentin-2CG1 (76 aa).

The signal sequence occupies residues 1-22 (MFTMKKSMLLLFFLGTISLSLC). The propeptide at 23 to 37 (EEERSADEDDGEEEV) is removed in mature form. A disulfide bridge connects residues cysteine 70 and cysteine 76.

Expressed by the skin glands.

The protein localises to the secreted. In terms of biological role, antimicrobial peptide active against a variety of Gram-positive and some Gram-negative bacterial strains. Has antifungal activity against a slime mold isolate. Has hemolytic activity against human erythrocytes. The sequence is that of Esculentin-2CG1 from Amolops chunganensis (Chungan torrent frog).